Consider the following 389-residue polypeptide: D-alanyl-D-alanine carboxypeptidase DacF (389 aa).

Residues 1 to 23 (MKRLLSTLLIGIMLLTFAPSAFA) form the signal peptide. The active-site Acyl-ester intermediate is the S64. The active-site Proton acceptor is the K67. S124 is an active-site residue. Residue K230 participates in substrate binding.

This sequence belongs to the peptidase S11 family.

It localises to the secreted. The catalysed reaction is Preferential cleavage: (Ac)2-L-Lys-D-Ala-|-D-Ala. Also transpeptidation of peptidyl-alanyl moieties that are N-acyl substituents of D-alanine.. It functions in the pathway cell wall biogenesis; peptidoglycan biosynthesis. Removes C-terminal D-alanyl residues from sugar-peptide cell wall precursors. This chain is D-alanyl-D-alanine carboxypeptidase DacF (dacF), found in Bacillus subtilis (strain 168).